The chain runs to 148 residues: Small ribosomal subunit protein bS6 (148 aa).

A disordered region spans residues 96–148 (HEEGQSAMLTRRDDRRERDGDDRPRRREGGFDRGDRGDRGPRRPRDNEAGEGA).

The protein belongs to the bacterial ribosomal protein bS6 family.

Binds together with bS18 to 16S ribosomal RNA. This is Small ribosomal subunit protein bS6 from Brucella melitensis biotype 1 (strain ATCC 23456 / CCUG 17765 / NCTC 10094 / 16M).